The primary structure comprises 381 residues: Succinyl-diaminopimelate desuccinylase (381 aa).

H68 is a Zn(2+) binding site. D70 is a catalytic residue. Residue D101 coordinates Zn(2+). The active-site Proton acceptor is the E135. Zn(2+) contacts are provided by E136, E164, and H350.

This sequence belongs to the peptidase M20A family. DapE subfamily. As to quaternary structure, homodimer. Requires Zn(2+) as cofactor. The cofactor is Co(2+).

It carries out the reaction N-succinyl-(2S,6S)-2,6-diaminopimelate + H2O = (2S,6S)-2,6-diaminopimelate + succinate. It participates in amino-acid biosynthesis; L-lysine biosynthesis via DAP pathway; LL-2,6-diaminopimelate from (S)-tetrahydrodipicolinate (succinylase route): step 3/3. In terms of biological role, catalyzes the hydrolysis of N-succinyl-L,L-diaminopimelic acid (SDAP), forming succinate and LL-2,6-diaminopimelate (DAP), an intermediate involved in the bacterial biosynthesis of lysine and meso-diaminopimelic acid, an essential component of bacterial cell walls. The chain is Succinyl-diaminopimelate desuccinylase from Neisseria gonorrhoeae (strain ATCC 700825 / FA 1090).